The following is a 287-amino-acid chain: Probable endoribonuclease YicC (287 aa).

Belongs to the YicC/YloC family. Requires a divalent metal cation as cofactor.

Probably a ssRNA endonuclease. Its function is as follows. Might contribute to small RNA (sRNA) regulation. In Salmonella typhimurium (strain LT2 / SGSC1412 / ATCC 700720), this protein is Probable endoribonuclease YicC.